A 139-amino-acid chain; its full sequence is Histone H3-like 5 (139 aa).

Residues 1–10 (MARTKQTARI) show a composition bias toward polar residues. Positions 1-43 (MARTKQTARISTGGKAPRKQLAPKAARQSAPATGGVKKPHRFR) are disordered. Position 5 is an N6,N6,N6-trimethyllysine; alternate (K5). An N6,N6-dimethyllysine; alternate modification is found at K5. K5 is subject to N6-methyllysine; alternate. At S11 the chain carries Phosphoserine. At T12 the chain carries Phosphothreonine. K15 is subject to N6-acetyllysine. N6-methyllysine; alternate is present on residues K19 and K24. Residues K19 and K24 each carry the N6-acetyllysine; alternate modification. Residue S29 is modified to Phosphoserine. K37 is modified (N6,N6,N6-trimethyllysine; alternate). Position 37 is an N6,N6-dimethyllysine; alternate (K37). K37 is modified (N6-methyllysine; alternate).

This sequence belongs to the histone H3 family. The nucleosome is a histone octamer containing two molecules each of H2A, H2B, H3 and H4 assembled in one H3-H4 heterotetramer and two H2A-H2B heterodimers. The octamer wraps approximately 147 bp of DNA.

The protein localises to the nucleus. It is found in the chromosome. In terms of biological role, core component of nucleosome. Nucleosomes wrap and compact DNA into chromatin, limiting DNA accessibility to the cellular machineries which require DNA as a template. Histones thereby play a central role in transcription regulation, DNA repair, DNA replication and chromosomal stability. DNA accessibility is regulated via a complex set of post-translational modifications of histones, also called histone code, and nucleosome remodeling. This is Histone H3-like 5 from Arabidopsis thaliana (Mouse-ear cress).